Reading from the N-terminus, the 35-residue chain is Protein YbgU (35 aa).

The chain is Protein YbgU from Escherichia coli (strain K12).